The chain runs to 147 residues: Large ribosomal subunit protein bL9 (147 aa).

This sequence belongs to the bacterial ribosomal protein bL9 family.

Its function is as follows. Binds to the 23S rRNA. This is Large ribosomal subunit protein bL9 from Mycoplasma capricolum subsp. capricolum (strain California kid / ATCC 27343 / NCTC 10154).